The chain runs to 214 residues: MGSAQSVPPEMRALAERTGFTSEQIEQLHRRFKQLNHNRKTIRKEDFDTIPDLEFNPIRARIVHAFFDKRNLRKAPAGLAEEINFEDFLTIMSYFRPIEMDMDEERLESFRKEKLKFLFHMYDADYDGIITLQEYKNVLDELMSGNPHLEKESLRAIAEGAMLEAASACMARTGPDEVYEGITFEDFLKVWKGIDIETKMHVRFLTMEAIAHCY.

G2 carries N-myristoyl glycine lipidation. One can recognise an EF-hand domain in the interval 110-145 (FRKEKLKFLFHMYDADYDGIITLQEYKNVLDELMSG). D123, D125, D127, and E134 together coordinate Ca(2+).

This sequence belongs to the calcineurin regulatory subunit family. CHP subfamily. In terms of assembly, monomer. Homodimer. Expressed in the bipotential gonad by E4.5 and expressed in both the testis and ovary by E5.5, but with expression higher in the testis. Expressed in the testis cords but also at low levels in the interstitium. In the ovary, expression is principally in the ovarian cortex, but also in the medulla. Also expressed in the embryonic brain, with expression highest in the region between the nasal placode and olfactory bulb. Also expressed in the embryonic heart and tail.

Its subcellular location is the nucleus. The protein localises to the cytoplasm. It localises to the membrane. The protein resides in the cell membrane. It is found in the cell projection. Its subcellular location is the lamellipodium. The protein localises to the ruffle membrane. Functionally, functions as an integral cofactor in cell pH regulation by controlling plasma membrane-type Na(+)/H(+) exchange activity. Promotes the induction of hematopoietic stem cell differentiation toward megakaryocytic lineage. Essential for the coupling of ERK cascade activation with the expression of ETS family genes in megakaryocytic differentiation. Also involved in granulocytic differentiation in a ERK-dependent manner. Inhibits the phosphatase activity of calcineurin. The sequence is that of Calcineurin B homologous protein 3 from Gallus gallus (Chicken).